A 410-amino-acid chain; its full sequence is Enterobactin exporter EntS (410 aa).

Residues 1 to 21 (MNKQSWLLNLSLLKTHPAFRA) lie on the Cytoplasmic side of the membrane. The chain crosses the membrane as a helical span at residues 22–42 (VFLARFISIVSLGLLGVAVPV). Residues 43-55 (QIQMMTHSTWQVG) lie on the Periplasmic side of the membrane. The chain crosses the membrane as a helical span at residues 56–76 (LSVTLTGGAMFVGLMVGGVLA). At 77–83 (DRYERKK) the chain is on the cytoplasmic side. Residues 84–104 (VILLARGTCGIGFIGLCLNAL) form a helical membrane-spanning segment. Residues 105-109 (LPEPS) lie on the Periplasmic side of the membrane. The chain crosses the membrane as a helical span at residues 110–130 (LLAIYLLGLWDGFFASLGVTA). Residues 131 to 156 (LLAATSALVGRENLMQAGAITMLTVR) are Cytoplasmic-facing. The helical transmembrane segment at 157 to 177 (LGSVISPMIGGLLLATGGVAW) threads the bilayer. Residue asparagine 178 is a topological domain, periplasmic. Residues 179 to 199 (YGLAAAGTFITLLPLLSLPEL) form a helical membrane-spanning segment. The Cytoplasmic segment spans residues 200–218 (PPPPQPLEHPLKSLLAGFR). The helical transmembrane segment at 219-233 (FLLASPLLGGLLTMA) threads the bilayer. Residues 234–250 (SAVLVLYPALADNWQMS) lie on the Periplasmic side of the membrane. A helical membrane pass occupies residues 251–271 (AAQIGFLYAAIPLGAAIGALT). Over 272–281 (SGKLAHSARP) the chain is Cytoplasmic. The chain crosses the membrane as a helical span at residues 282-301 (GLLMLLSTLGSFLAIGLFGL). Topologically, residues 302–307 (MPMWIL) are periplasmic. A helical transmembrane segment spans residues 308 to 330 (GVVCLALFGWLSAVSSLLQYTML). Residues 331–350 (QTQTPEAMLGRINGLWTAQN) are Cytoplasmic-facing. Residues 351–371 (VTGDAIGAALLGGLGAMMTPV) form a helical membrane-spanning segment. Alanine 372 is a topological domain (periplasmic). A helical membrane pass occupies residues 373–393 (SASASGFGLLIIGVLLLLVLV). Residues 394–410 (ELRRFRQTPPQVTASDS) lie on the Cytoplasmic side of the membrane.

Belongs to the major facilitator superfamily. EntS (TC 2.A.1.38) family.

It localises to the cell inner membrane. Its function is as follows. Component of an export pathway for enterobactin. The sequence is that of Enterobactin exporter EntS from Shigella flexneri.